The primary structure comprises 207 residues: Small ribosomal subunit protein uS4 (207 aa).

In terms of domain architecture, S4 RNA-binding spans 97 to 160 (SRLDNVVYRM…KKQARIVEAL (64 aa)).

The protein belongs to the universal ribosomal protein uS4 family. As to quaternary structure, part of the 30S ribosomal subunit. Contacts protein S5. The interaction surface between S4 and S5 is involved in control of translational fidelity.

Functionally, one of the primary rRNA binding proteins, it binds directly to 16S rRNA where it nucleates assembly of the body of the 30S subunit. Its function is as follows. With S5 and S12 plays an important role in translational accuracy. This Burkholderia pseudomallei (strain 1106a) protein is Small ribosomal subunit protein uS4.